The following is a 169-amino-acid chain: Large ribosomal subunit protein bL9 (169 aa).

Belongs to the bacterial ribosomal protein bL9 family.

In terms of biological role, binds to the 23S rRNA. The chain is Large ribosomal subunit protein bL9 from Chlamydia pneumoniae (Chlamydophila pneumoniae).